Here is a 147-residue protein sequence, read N- to C-terminus: Prefoldin subunit alpha (147 aa).

The protein belongs to the prefoldin subunit alpha family. Heterohexamer of two alpha and four beta subunits.

Its subcellular location is the cytoplasm. Molecular chaperone capable of stabilizing a range of proteins. Seems to fulfill an ATP-independent, HSP70-like function in archaeal de novo protein folding. In Saccharolobus solfataricus (strain ATCC 35092 / DSM 1617 / JCM 11322 / P2) (Sulfolobus solfataricus), this protein is Prefoldin subunit alpha (pfdA).